A 104-amino-acid chain; its full sequence is Nucleoid-associated protein EF_2780 (104 aa).

It belongs to the YbaB/EbfC family. As to quaternary structure, homodimer.

It localises to the cytoplasm. The protein resides in the nucleoid. Functionally, binds to DNA and alters its conformation. May be involved in regulation of gene expression, nucleoid organization and DNA protection. This chain is Nucleoid-associated protein EF_2780, found in Enterococcus faecalis (strain ATCC 700802 / V583).